The sequence spans 110 residues: Nucleoid-associated protein KPN78578_04440 (110 aa).

Belongs to the YbaB/EbfC family. In terms of assembly, homodimer.

The protein resides in the cytoplasm. Its subcellular location is the nucleoid. Functionally, binds to DNA and alters its conformation. May be involved in regulation of gene expression, nucleoid organization and DNA protection. The sequence is that of Nucleoid-associated protein KPN78578_04440 from Klebsiella pneumoniae subsp. pneumoniae (strain ATCC 700721 / MGH 78578).